Reading from the N-terminus, the 140-residue chain is Large ribosomal subunit protein uL16 (140 aa).

Over residues 1–16 (MLMPKRVKHRKQMKGR) the composition is skewed to basic residues. Positions 1–20 (MLMPKRVKHRKQMKGRMKGD) are disordered.

This sequence belongs to the universal ribosomal protein uL16 family. In terms of assembly, part of the 50S ribosomal subunit.

Functionally, binds 23S rRNA and is also seen to make contacts with the A and possibly P site tRNAs. This chain is Large ribosomal subunit protein uL16, found in Geobacter sulfurreducens (strain ATCC 51573 / DSM 12127 / PCA).